The primary structure comprises 855 residues: uncharacterized protein (855 aa).

The next 10 helical transmembrane spans lie at 24 to 44 (PFQYILLVLGIALGVAMIVAI), 256 to 276 (AFTVNLTALSLIALLVGIFLI), 318 to 338 (IGTGLGLLIGIWLGEGLIGLV), 361 to 381 (LLKGLIIGIFAAMLATLPPAI), 404 to 424 (LMPWLWVAWFGLGSFGVLMLW), 430 to 450 (LVVAFVGLFSVLIALALIAPP), 487 to 507 (IAIAALMMAVSLMVGVSISVG), 725 to 745 (ITIALQLVATVVAFIGVLSAL), 780 to 800 (MGGMAGLMALPTGCILAWILV), and 821 to 841 (FLRALLVAVVAALAAGMYPAW).

It belongs to the ABC-4 integral membrane protein family. In terms of assembly, the complex is probably composed of two ATP-binding proteins (Rv0986) and two transmembrane proteins (Rv0987).

The protein localises to the cell membrane. Functionally, probably part of an ABC transporter complex involved in host cell binding either through secretion of an adherence factor or through maintaining the architecture and integrity of the mycobacterial cell envelope. Could be required for host endothelial-cell invasion and/or intracellular survival. This is an uncharacterized protein from Mycobacterium tuberculosis (strain ATCC 25618 / H37Rv).